The following is a 216-amino-acid chain: Thiamine-phosphate synthase (216 aa).

Residues 41–45 (QLREK) and aspartate 77 each bind 4-amino-2-methyl-5-(diphosphooxymethyl)pyrimidine. Aspartate 78 and aspartate 97 together coordinate Mg(2+). Residue serine 116 participates in 4-amino-2-methyl-5-(diphosphooxymethyl)pyrimidine binding. Residue 143-145 (TTS) coordinates 2-[(2R,5Z)-2-carboxy-4-methylthiazol-5(2H)-ylidene]ethyl phosphate. Position 146 (lysine 146) interacts with 4-amino-2-methyl-5-(diphosphooxymethyl)pyrimidine. 2-[(2R,5Z)-2-carboxy-4-methylthiazol-5(2H)-ylidene]ethyl phosphate is bound by residues glycine 174 and 194–195 (IS).

This sequence belongs to the thiamine-phosphate synthase family. Mg(2+) is required as a cofactor.

The catalysed reaction is 2-[(2R,5Z)-2-carboxy-4-methylthiazol-5(2H)-ylidene]ethyl phosphate + 4-amino-2-methyl-5-(diphosphooxymethyl)pyrimidine + 2 H(+) = thiamine phosphate + CO2 + diphosphate. The enzyme catalyses 2-(2-carboxy-4-methylthiazol-5-yl)ethyl phosphate + 4-amino-2-methyl-5-(diphosphooxymethyl)pyrimidine + 2 H(+) = thiamine phosphate + CO2 + diphosphate. It carries out the reaction 4-methyl-5-(2-phosphooxyethyl)-thiazole + 4-amino-2-methyl-5-(diphosphooxymethyl)pyrimidine + H(+) = thiamine phosphate + diphosphate. The protein operates within cofactor biosynthesis; thiamine diphosphate biosynthesis; thiamine phosphate from 4-amino-2-methyl-5-diphosphomethylpyrimidine and 4-methyl-5-(2-phosphoethyl)-thiazole: step 1/1. Condenses 4-methyl-5-(beta-hydroxyethyl)thiazole monophosphate (THZ-P) and 2-methyl-4-amino-5-hydroxymethyl pyrimidine pyrophosphate (HMP-PP) to form thiamine monophosphate (TMP). The sequence is that of Thiamine-phosphate synthase from Pediococcus pentosaceus (strain ATCC 25745 / CCUG 21536 / LMG 10740 / 183-1w).